We begin with the raw amino-acid sequence, 1420 residues long: Mediator of RNA polymerase II transcription subunit 13 (1420 aa).

Serine 370, serine 375, and serine 425 each carry phosphoserine. Over residues 416–427 (TTVSNDLENSPL) the composition is skewed to polar residues. Residues 416-511 (TTVSNDLENS…TNESNKSISD (96 aa)) are disordered. Over residues 429-439 (TELEANGRSLE) the composition is skewed to basic and acidic residues. Positions 440-453 (KVNNSVSKTGSVDT) are enriched in polar residues. Positions 454–484 (LHNKEGTLEQREQNENLPSDKSDSMVDKELF) are enriched in basic and acidic residues. Residues 494–508 (GDSNKSNSTNESNKS) show a composition bias toward low complexity. A Phosphothreonine modification is found at threonine 601. Serine 608 bears the Phosphoserine; by PKA mark. At serine 636 the chain carries Phosphoserine. Positions 653–691 (LSSSEEEEDEEENGSSDEDLKSLNVRDDMKPSDNISTNT) are disordered. The segment covering 655-669 (SSEEEEDEEENGSSD) has biased composition (acidic residues). The span at 670–683 (EDLKSLNVRDDMKP) shows a compositional bias: basic and acidic residues. Serine 748 carries the post-translational modification Phosphoserine.

The protein belongs to the Mediator complex subunit 13 family. As to quaternary structure, component of the SRB8-11 complex which consists of SRB8, SSN2/SRB9, SSN3/SRB10 and SSN8/SRB11. The SRB8-11 complex associates with the Mediator complex. The SSN3/SRB10 and SSN8/SRB11 kinase-cyclin pair also associate with the RNA polymerase II holoenzyme. Post-translationally, phosphorylated. PKA-dependent phosphorylation at 'Ser-608' is enhanced by activation of the RAS signaling pathway.

Its subcellular location is the nucleus. Component of the SRB8-11 complex. The SRB8-11 complex is a regulatory module of the Mediator complex which is itself involved in regulation of basal and activated RNA polymerase II-dependent transcription. The SRB8-11 complex may be involved in the transcriptional repression of a subset of genes regulated by Mediator. It may inhibit the association of the Mediator complex with RNA polymerase II to form the holoenzyme complex. The SRB8-11 complex phosphorylates the C-terminal domain (CTD) of the largest subunit of RNA polymerase II RPB1 at serines 2 and 5. The polypeptide is Mediator of RNA polymerase II transcription subunit 13 (SSN2) (Saccharomyces cerevisiae (strain ATCC 204508 / S288c) (Baker's yeast)).